We begin with the raw amino-acid sequence, 332 residues long: CRISPR-associated endonuclease Cas1 3 (332 aa).

3 residues coordinate Mn(2+): Glu-159, His-224, and Glu-239.

It belongs to the CRISPR-associated endonuclease Cas1 family. As to quaternary structure, homodimer, forms a heterotetramer with a Cas2 homodimer. The cofactor is Mg(2+). Mn(2+) serves as cofactor.

In terms of biological role, CRISPR (clustered regularly interspaced short palindromic repeat), is an adaptive immune system that provides protection against mobile genetic elements (viruses, transposable elements and conjugative plasmids). CRISPR clusters contain spacers, sequences complementary to antecedent mobile elements, and target invading nucleic acids. CRISPR clusters are transcribed and processed into CRISPR RNA (crRNA). Acts as a dsDNA endonuclease. Involved in the integration of spacer DNA into the CRISPR cassette. The polypeptide is CRISPR-associated endonuclease Cas1 3 (Thermus thermophilus (strain ATCC 27634 / DSM 579 / HB8)).